Here is a 470-residue protein sequence, read N- to C-terminus: 5-hydroxytryptamine receptor 2A (470 aa).

The Extracellular segment spans residues 1–80; that stretch reads MDVLCEENTS…LQEKNWSALL (80 aa). Asn-8, Asn-38, Asn-44, Asn-51, Asn-54, and Asn-75 each carry an N-linked (GlcNAc...) asparagine glycan. Residues 81–97 form a helical membrane-spanning segment; sequence TAVVIILTIAGNILVIM. The Cytoplasmic segment spans residues 98 to 111; it reads AVSLEKKLQNATNY. Residues 112 to 137 form a helical membrane-spanning segment; the sequence is FLMSLAIADMLLGFLVMPVSMLTILY. The Extracellular portion of the chain corresponds to 138-146; sequence GYRWPLPSK. Residues 147–171 form a helical membrane-spanning segment; sequence LCAVWIYLDVLFSTASIMHLCAISL. Cys-148 and Cys-227 form a disulfide bridge. Asp-155 contacts serotonin. Residues 172 to 174 carry the DRY motif; important for ligand-induced conformation changes motif; that stretch reads DRY. The Cytoplasmic portion of the chain corresponds to 172–191; that stretch reads DRYVAIQNPIHHRRFNSRTK. A helical membrane pass occupies residues 192 to 215; the sequence is AFLKIIAVWTISVGISMPIPVFGL. Topologically, residues 216–232 are extracellular; that stretch reads QDDSKVFKEGSCLLADD. The chain crosses the membrane as a helical span at residues 233 to 258; it reads NFVLIGSFVSFFIPLTIMVITYFLTI. The Cytoplasmic segment spans residues 259–321; it reads KSLQKEATLC…QSISNEQKAC (63 aa). Phosphoserine is present on Ser-280. The chain crosses the membrane as a helical span at residues 322–347; it reads KVLGIVFFLFVVMWCPFFITNIMAVI. Asn-342 serves as a coordination point for serotonin. A disulfide bridge connects residues Cys-348 and Cys-352. The Extracellular segment spans residues 348–355; it reads CKESCNED. A helical membrane pass occupies residues 356-381; that stretch reads VIGALLNVFVWIGYLSSAVNPLVYTL. Positions 375-379 match the NPxxY motif; important for ligand-induced conformation changes and signaling motif; it reads NPLVY. Over 382-470 the chain is Cytoplasmic; it reads FNKTYRSAFS…NTVNEKVSCV (89 aa). The tract at residues 448–470 is disordered; sequence GKQHSEDAPADNSNTVNEKVSCV. A compositionally biased stretch (polar residues) spans 458 to 470; that stretch reads DNSNTVNEKVSCV. The PDZ-binding motif lies at 468-470; it reads SCV.

This sequence belongs to the G-protein coupled receptor 1 family. Interacts (via C-terminus) with MPDZ and PATJ. May interact (via C-terminus) with MPP3, PRDX6, DLG4, DLG1, CASK, APBA1 and MAGI2. Interacts with GRM2 and DRD2; this may affect signaling.

It localises to the cell membrane. It is found in the cell projection. Its subcellular location is the dendrite. The protein localises to the axon. The protein resides in the cytoplasmic vesicle. It localises to the membrane. It is found in the caveola. Its subcellular location is the presynapse. G-protein coupled receptor activity is regulated by lipids: oleamide increases HTR2A-mediated activity. In terms of biological role, G-protein coupled receptor for 5-hydroxytryptamine (serotonin). Also functions as a receptor for various drugs and psychoactive substances, including mescaline, psilocybin, 1-(2,5-dimethoxy-4-iodophenyl)-2-aminopropane (DOI) and lysergic acid diethylamide (LSD). Ligand binding causes a conformation change that triggers signaling via guanine nucleotide-binding proteins (G proteins) and modulates the activity of downstream effectors. HTR2A is coupled to G(q)/G(11) G alpha proteins and activates phospholipase C-beta, releasing diacylglycerol (DAG) and inositol 1,4,5-trisphosphate (IP3) second messengers that modulate the activity of phosphatidylinositol 3-kinase and promote the release of Ca(2+) ions from intracellular stores, respectively. Beta-arrestin family members inhibit signaling via G proteins and mediate activation of alternative signaling pathways. Affects neural activity, perception, cognition and mood. Plays a role in the regulation of behavior, including responses to anxiogenic situations and psychoactive substances. Plays a role in intestinal smooth muscle contraction, and may play a role in arterial vasoconstriction. In Sus scrofa (Pig), this protein is 5-hydroxytryptamine receptor 2A (HTR2A).